Here is a 501-residue protein sequence, read N- to C-terminus: NAD(P)H-quinone oxidoreductase chain 4, chloroplastic (501 aa).

Transmembrane regions (helical) follow at residues 5 to 25 (FPWL…IFFL), 38 to 58 (TCIC…HFQL), 88 to 108 (IGPI…AWPV), 114 to 131 (LFYL…GLFS), 135 to 155 (LLLF…LLSM), 168 to 188 (FILY…GMGL), 209 to 229 (ALEI…SPII), 243 to 263 (HYST…YGLI), 273 to 293 (AHSL…IYAA), 306 to 326 (IACS…SITD), 331 to 351 (GAIL…FLSG), 387 to 407 (LALP…GIIT), 417 to 437 (ILIT…LLSM), and 464 to 484 (FVSI…DCVF).

The protein belongs to the complex I subunit 4 family.

The protein localises to the plastid. Its subcellular location is the chloroplast thylakoid membrane. It catalyses the reaction a plastoquinone + NADH + (n+1) H(+)(in) = a plastoquinol + NAD(+) + n H(+)(out). It carries out the reaction a plastoquinone + NADPH + (n+1) H(+)(in) = a plastoquinol + NADP(+) + n H(+)(out). The protein is NAD(P)H-quinone oxidoreductase chain 4, chloroplastic of Dioscorea elephantipes (Elephant's foot yam).